A 346-amino-acid polypeptide reads, in one-letter code: MGENLPLLLSAALGKKVNRPPVWMMRQAGRYMKIYRDLRERYPSFRERSENPELSYEISMQPFHAFKPDGVILFSDILTPLPGMGINFEIIESKGPIIEDPIRTLNQVENLKELSPSESLSFVGEVLTSLKKDVNNEATVLGFVGAPWTLAAYVVEGKSSKNYSLIKSMAFNKPDLLHKLLDHFAKSIGEYLKYQIKSGAQVVQIFDSWAGQLSPQDYDIFAGPYQKKVVEIVKAEYPETPIILYISGSAGVLERMAKTGVDIISLDWTVDIEEACKRIPRGIGIQGNVDPGILFGNKESIKERIDNTFNKIKDRKYILNLGHGILPGTPEENAQTFFEHGKKLTY.

Substrate is bound by residues 26-30, aspartate 76, tyrosine 153, serine 208, and histidine 323; that span reads RQAGR.

It belongs to the uroporphyrinogen decarboxylase family. Homodimer.

The protein resides in the cytoplasm. It carries out the reaction uroporphyrinogen III + 4 H(+) = coproporphyrinogen III + 4 CO2. It functions in the pathway porphyrin-containing compound metabolism; protoporphyrin-IX biosynthesis; coproporphyrinogen-III from 5-aminolevulinate: step 4/4. Its function is as follows. Catalyzes the decarboxylation of four acetate groups of uroporphyrinogen-III to yield coproporphyrinogen-III. The chain is Uroporphyrinogen decarboxylase from Prochlorococcus marinus (strain MIT 9301).